Consider the following 163-residue polypeptide: Phosphopantetheine adenylyltransferase (163 aa).

Ser10 contacts substrate. ATP is bound by residues 10–11 (SF) and His18. Substrate contacts are provided by Lys42, Leu74, and Arg88. ATP contacts are provided by residues 89–91 (GLR), Glu99, and 124–130 (YSFLSSS).

It belongs to the bacterial CoaD family. Homohexamer. The cofactor is Mg(2+).

It localises to the cytoplasm. The enzyme catalyses (R)-4'-phosphopantetheine + ATP + H(+) = 3'-dephospho-CoA + diphosphate. The protein operates within cofactor biosynthesis; coenzyme A biosynthesis; CoA from (R)-pantothenate: step 4/5. Its function is as follows. Reversibly transfers an adenylyl group from ATP to 4'-phosphopantetheine, yielding dephospho-CoA (dPCoA) and pyrophosphate. In Bacillus mycoides (strain KBAB4) (Bacillus weihenstephanensis), this protein is Phosphopantetheine adenylyltransferase.